A 201-amino-acid chain; its full sequence is Pyridoxine/pyridoxamine 5'-phosphate oxidase (201 aa).

FMN is bound by residues Arg-49–Lys-54, Tyr-64–Thr-65, Lys-71, and Gln-93. Lys-54 provides a ligand contact to substrate. The substrate site is built by Tyr-111, Arg-115, and Ser-119. Residues Gln-128–Ser-129 and Trp-172 contribute to the FMN site. Arg-178–His-180 lines the substrate pocket. Arg-182 contacts FMN.

The protein belongs to the pyridoxamine 5'-phosphate oxidase family. In terms of assembly, homodimer. The cofactor is FMN.

The enzyme catalyses pyridoxamine 5'-phosphate + O2 + H2O = pyridoxal 5'-phosphate + H2O2 + NH4(+). It carries out the reaction pyridoxine 5'-phosphate + O2 = pyridoxal 5'-phosphate + H2O2. It participates in cofactor metabolism; pyridoxal 5'-phosphate salvage; pyridoxal 5'-phosphate from pyridoxamine 5'-phosphate: step 1/1. Its pathway is cofactor metabolism; pyridoxal 5'-phosphate salvage; pyridoxal 5'-phosphate from pyridoxine 5'-phosphate: step 1/1. In terms of biological role, catalyzes the oxidation of either pyridoxine 5'-phosphate (PNP) or pyridoxamine 5'-phosphate (PMP) into pyridoxal 5'-phosphate (PLP). The chain is Pyridoxine/pyridoxamine 5'-phosphate oxidase from Ruegeria sp. (strain TM1040) (Silicibacter sp.).